We begin with the raw amino-acid sequence, 92 residues long: Small ribosomal subunit protein uS19c (92 aa).

This sequence belongs to the universal ribosomal protein uS19 family.

Its subcellular location is the plastid. It is found in the chloroplast. Functionally, protein S19 forms a complex with S13 that binds strongly to the 16S ribosomal RNA. This is Small ribosomal subunit protein uS19c from Psilotum nudum (Whisk fern).